Reading from the N-terminus, the 261-residue chain is MSRRYDSRTTIFSPEGRLYQVEYAMEAIGHAGTCLGILANDGVLLAAERRNIHKLLDEVFFSEKIYKLNEDMACSVAGITSDANVLTNELRLIAQRYLLQYQEPIPCEQLVTALCDIKQAYTQFGGKRPFGVSLLYIGWDKHYGFQLYQSDPSGNYGGWKATCIGNNSAAAVSMLKQDYKEGEMTLKSALALAIKVLNKTMDVSKLSAEKVEIATLTRENGKTVIRVLKQKEVEQLIKKHEEEEAKAEREKKEKEQKEKDK.

Phosphoserine occurs at positions 13 and 75. K127 carries the post-translational modification N6-acetyllysine. A Phosphoserine modification is found at S173. N6-acetyllysine is present on K176. Residues 240–261 (HEEEEAKAEREKKEKEQKEKDK) form a disordered region.

This sequence belongs to the peptidase T1A family. The 26S proteasome consists of a 20S proteasome core and two 19S regulatory subunits. The 20S proteasome core is a barrel-shaped complex made of 28 subunits that are arranged in four stacked rings. The two outer rings are each formed by seven alpha subunits, and the two inner rings are formed by seven beta subunits. The proteolytic activity is exerted by three beta-subunits PSMB5, PSMB6 and PSMB7.

It is found in the cytoplasm. The protein resides in the nucleus. Functionally, component of the 20S core proteasome complex involved in the proteolytic degradation of most intracellular proteins. This complex plays numerous essential roles within the cell by associating with different regulatory particles. Associated with two 19S regulatory particles, forms the 26S proteasome and thus participates in the ATP-dependent degradation of ubiquitinated proteins. The 26S proteasome plays a key role in the maintenance of protein homeostasis by removing misfolded or damaged proteins that could impair cellular functions, and by removing proteins whose functions are no longer required. Associated with the PA200 or PA28, the 20S proteasome mediates ubiquitin-independent protein degradation. This type of proteolysis is required in several pathways including spermatogenesis (20S-PA200 complex) or generation of a subset of MHC class I-presented antigenic peptides (20S-PA28 complex). The sequence is that of Proteasome subunit alpha type-4 (PSMA4) from Bos taurus (Bovine).